Here is a 434-residue protein sequence, read N- to C-terminus: MGIKNLKSLLLENKSLTILDDNLYKVYNGIFVDTMSIYIAVANCVRNLEELTTVFIKYVNGWVKKGGHVTLFIDRGSIKIKQNVRDKRRKYSKSTKDRKMLELEKCTSKIQNVTGFMEEEIKAEIQLKIDKLTFQIYLSDSDNIKISLNEILTHFNNNENVTLFYCDERDAEFVMCLEAKTYFFTTGEWPLIISTDQDTMLFASVDNHPKMIKNLTQLFKFVPSAEDNYLAKLTALVNGCDFFPGLYGASITPTNLNKIQLFSDFTINNIVTSLAIKNYYRKTNSTVDVRNIVTFINDYANLDDVYSYIPPCQCTVQEFIFSALDEKWNDFKSSYLETVPLPCQLMYALEPRKEIDVSEVKTLSSYIDFENTKSDIDVIKSISSIFGYSNENCNTIVFGIYKDNLLLSINSSFYFNNSLLITNTKSDNIINIGY.

Residues Asp33, Asp74, Glu168, Asp170, Asp196, and Asp198 each coordinate Mg(2+).

The protein belongs to the XPG/RAD2 endonuclease family. FEN1 subfamily. Mg(2+) is required as a cofactor.

The protein localises to the virion. Its function is as follows. Putative nuclease that seems to be required for double-strand break repair, homologous recombination, and production of full-length viral genomic DNA. In Homo sapiens (Human), this protein is Putative nuclease OPG089 (OPG089).